The sequence spans 385 residues: Cytochrome b (385 aa).

4 consecutive transmembrane segments (helical) span residues phenylalanine 32–methionine 52, tryptophan 76–phenylalanine 98, leucine 113–valine 133, and phenylalanine 179–alanine 199. Heme b-binding residues include histidine 82 and histidine 96. The heme b site is built by histidine 183 and histidine 197. Residue histidine 202 participates in a ubiquinone binding. 4 helical membrane passes run phenylalanine 226–phenylalanine 246, leucine 290–threonine 310, serine 322–phenylalanine 342, and tyrosine 349–valine 369.

It belongs to the cytochrome b family. As to quaternary structure, the main subunits of complex b-c1 are: cytochrome b, cytochrome c1 and the Rieske protein. Requires heme b as cofactor.

Its subcellular location is the mitochondrion inner membrane. In terms of biological role, component of the ubiquinol-cytochrome c reductase complex (complex III or cytochrome b-c1 complex) that is part of the mitochondrial respiratory chain. The b-c1 complex mediates electron transfer from ubiquinol to cytochrome c. Contributes to the generation of a proton gradient across the mitochondrial membrane that is then used for ATP synthesis. This is Cytochrome b (MT-CYB) from Acanthamoeba castellanii (Amoeba).